The sequence spans 93 residues: Protein S100-A5 (93 aa).

2 EF-hand domains span residues 12-47 (MVTT…LAEK) and 48-83 (MKES…LCMA). Ca(2+) contacts are provided by Thr28, Glu33, Asp61, Asn63, Asp65, Glu67, and Glu72.

Belongs to the S-100 family. As to quaternary structure, homodimer.

Its function is as follows. Binds calcium, zinc and copper. One subunit can simultaneously bind 2 calcium ions or 2 copper ions plus 1 zinc ion. Calcium and copper ions compete for the same binding sites. This Mus musculus (Mouse) protein is Protein S100-A5 (S100a5).